The primary structure comprises 77 residues: Putative antitoxin VapB24 (77 aa).

Functionally, possibly the antitoxin component of a type II toxin-antitoxin (TA) system. Its cognate toxin is VapC24 (Potential). The chain is Putative antitoxin VapB24 (vapB24) from Mycobacterium tuberculosis (strain CDC 1551 / Oshkosh).